The chain runs to 153 residues: Cornifin-B (153 aa).

Disordered stretches follow at residues 1-35 (MSSH…PCVS) and 49-85 (CHPK…HPKA). 14 tandem repeats follow at residues 27-34 (PPPPEPCV), 35-42 (SQVKTPCD), 43-50 (TKVPEPCH), 51-58 (PKAPEPCH), 59-66 (PKAPEPCH), 67-74 (PKAPEPCH), 75-82 (PKAPEPCH), 83-90 (PKAPEPCH), 91-98 (PKAPEPCH), 99-106 (PKAPEPCH), 107-114 (PKAPEPCH), 115-122 (PKVPEPCL), 123-130 (PKAPEPCQ), and 131-138 (PIVPEPCP). The 14 X 8 AA approximate tandem repeats stretch occupies residues 27-138 (PPPPEPCVSQ…CQPIVPEPCP (112 aa)).

Belongs to the cornifin (SPRR) family. Expressed in fetal periderm, hair follicles and in the thickened epidermis of the lip and footpad. Also present in the epithelia of various tissues such as the penis, vagina, forestomach, tongue and esophagus.

It localises to the cytoplasm. In terms of biological role, cross-linked envelope protein of keratinocytes. It is a keratinocyte protein that first appears in the cell cytosol, but ultimately becomes cross-linked to membrane proteins by transglutaminase. All that results in the formation of an insoluble envelope beneath the plasma membrane. The chain is Cornifin-B (Sprr1b) from Mus musculus (Mouse).